A 210-amino-acid polypeptide reads, in one-letter code: High frequency lysogenization protein HflD homolog (210 aa).

A coiled-coil region spans residues Glu-103–Gln-130.

This sequence belongs to the HflD family.

It localises to the cytoplasm. The protein resides in the cell inner membrane. The chain is High frequency lysogenization protein HflD homolog from Actinobacillus pleuropneumoniae serotype 3 (strain JL03).